We begin with the raw amino-acid sequence, 55 residues long: Large ribosomal subunit protein bL33 (55 aa).

This sequence belongs to the bacterial ribosomal protein bL33 family.

The protein is Large ribosomal subunit protein bL33 of Arthrobacter sp. (strain FB24).